Here is an 886-residue protein sequence, read N- to C-terminus: Alanine--tRNA ligase (886 aa).

The Zn(2+) site is built by His564, His568, Cys666, and His670.

It belongs to the class-II aminoacyl-tRNA synthetase family. It depends on Zn(2+) as a cofactor.

It localises to the cytoplasm. The catalysed reaction is tRNA(Ala) + L-alanine + ATP = L-alanyl-tRNA(Ala) + AMP + diphosphate. Functionally, catalyzes the attachment of alanine to tRNA(Ala) in a two-step reaction: alanine is first activated by ATP to form Ala-AMP and then transferred to the acceptor end of tRNA(Ala). Also edits incorrectly charged Ser-tRNA(Ala) and Gly-tRNA(Ala) via its editing domain. The protein is Alanine--tRNA ligase of Prochlorococcus marinus subsp. pastoris (strain CCMP1986 / NIES-2087 / MED4).